The following is a 174-amino-acid chain: Nicotinamide-nucleotide adenylyltransferase (174 aa).

This sequence belongs to the archaeal NMN adenylyltransferase family.

The protein resides in the cytoplasm. It carries out the reaction beta-nicotinamide D-ribonucleotide + ATP + H(+) = diphosphate + NAD(+). The protein operates within cofactor biosynthesis; NAD(+) biosynthesis; NAD(+) from nicotinamide D-ribonucleotide: step 1/1. The chain is Nicotinamide-nucleotide adenylyltransferase from Archaeoglobus fulgidus (strain ATCC 49558 / DSM 4304 / JCM 9628 / NBRC 100126 / VC-16).